Reading from the N-terminus, the 331-residue chain is UDP-GalNAc:beta-1,3-N-acetylgalactosaminyltransferase 1 (331 aa).

At 1 to 20 the chain is on the cytoplasmic side; it reads MASALWTVLPSRMSLRSLKW. Residues 21-43 form a helical; Signal-anchor for type II membrane protein membrane-spanning segment; sequence SLLLLSLLSFFVMWYLSLPHYNV. The Lumenal segment spans residues 44–331; that stretch reads IERVNWMYFY…VMLRNTTCHY (288 aa). N-linked (GlcNAc...) asparagine glycosylation is found at asparagine 72, asparagine 154, asparagine 198, asparagine 212, and asparagine 326.

Belongs to the glycosyltransferase 31 family. Requires Mg(2+) as cofactor. As to expression, higher expression in heart and brain, and to a lesser extent in lung, placenta, kidney and testis. Lower expression in liver, spleen and stomach. No expression in skeletal muscle.

It localises to the golgi apparatus membrane. The catalysed reaction is a globoside Gb3Cer (d18:1(4E)) + UDP-N-acetyl-alpha-D-galactosamine = a globoside Gb4Cer (d18:1(4E)) + UDP + H(+). It participates in protein modification; protein glycosylation. Transfers N-acetylgalactosamine onto globotriaosylceramide. Plays a critical role in preimplantation stage embryonic development. The polypeptide is UDP-GalNAc:beta-1,3-N-acetylgalactosaminyltransferase 1 (Homo sapiens (Human)).